Reading from the N-terminus, the 610-residue chain is 6(G)-fructosyltransferase (610 aa).

Over 1–20 (MATSLQAPILGSRPPRRTLR) the chain is Cytoplasmic. Residues 21–38 (FLSFALFSALVLVVASFS) traverse the membrane as a helical; Signal-anchor for type II membrane protein segment. Over 39–610 (SRKSESGSGL…NQYYPFTSSN (572 aa)) the chain is Vacuolar. Substrate-binding positions include 79 to 82 (YMND), Q98, W106, 141 to 142 (WT), and 207 to 208 (RD). Residue D82 is part of the active site. N215, N229, and N248 each carry an N-linked (GlcNAc...) asparagine glycan. Substrate is bound at residue E266. The N-linked (GlcNAc...) asparagine glycan is linked to N459. Cysteines 460 and 508 form a disulfide. N-linked (GlcNAc...) asparagine glycosylation is found at N580 and N597.

This sequence belongs to the glycosyl hydrolase 32 family. Might be processed in two N-terminal and C-terminal proteolytic fragments.

The protein resides in the vacuole membrane. It catalyses the reaction [1-beta-D-fructofuranosyl-(2-&gt;1)-]m+1 alpha-D-glucopyranoside + [1-beta-D-fructofuranosyl-(2-&gt;1)-]n+1 alpha-D-glucopyranoside = [1-beta-D-fructofuranosyl-(2-&gt;1)-]m alpha-D-glucopyranoside + [1-beta-D-fructofuranosyl-(2-&gt;1)-]n+1 beta-D-fructofuranosyl-(2-&gt;6)-alpha-D-glucopyranoside (m &gt; 0, n &gt;= 0).. Its function is as follows. Involved in the synthesis of fructan of the inulin neoseries. Has no 1-FFT activity. In Asparagus officinalis (Garden asparagus), this protein is 6(G)-fructosyltransferase (FT1).